The primary structure comprises 242 residues: MTTKLIAGNWKLNGSLAKNAALIDELRRAEMHCVVCVPYPYLAQAQALVAGSLIELGAQDVSEYEQGAYTGEVSAAMLVEFGCRYVIVGHSERRALFGDSDQVVGRKAASALAAGLTPIVCVGETLAERELGEVEAVIRRQLQAVADCVGGEALPTLVVAYEPVWAIGTGRSATPEQVAQTHGFIRAWFSARCDASAVRILYGGSVKPENAAVLFSTDDVDGGLIGGASLVGSDFVAICRAA.

9–11 provides a ligand contact to substrate; sequence NWK. The active-site Electrophile is the His-90. Catalysis depends on Glu-162, which acts as the Proton acceptor. Residues Gly-168, Ser-205, and 226 to 227 contribute to the substrate site; that span reads GG.

Belongs to the triosephosphate isomerase family. Homodimer.

It localises to the cytoplasm. The enzyme catalyses D-glyceraldehyde 3-phosphate = dihydroxyacetone phosphate. It functions in the pathway carbohydrate biosynthesis; gluconeogenesis. Its pathway is carbohydrate degradation; glycolysis; D-glyceraldehyde 3-phosphate from glycerone phosphate: step 1/1. In terms of biological role, involved in the gluconeogenesis. Catalyzes stereospecifically the conversion of dihydroxyacetone phosphate (DHAP) to D-glyceraldehyde-3-phosphate (G3P). The protein is Triosephosphate isomerase of Azoarcus sp. (strain BH72).